The sequence spans 318 residues: Ubiquinol oxidase (318 aa).

A helical transmembrane segment spans residues 150–170; that stretch reads VVVLETVAAIPGMVGGMFRHL. Residues E154, E193, and H196 each coordinate Fe cation. The chain crosses the membrane as a helical span at residues 212–232; it reads MLIKLGQFLFFNGYMVFYFVA. Residues E244, E295, and H298 each coordinate Fe cation.

Belongs to the alternative oxidase family. In terms of assembly, found as monomers and homodimers. Requires Fe cation as cofactor.

Its subcellular location is the mitosome membrane. It catalyses the reaction 2 a ubiquinol + O2 = 2 a ubiquinone + 2 H2O. Alternative oxidase which function may be to reoxidize reducing equivalents produced by glycolysis such as ubiquinol. This chain is Ubiquinol oxidase (AOX), found in Trachipleistophora hominis (Microsporidian parasite).